Consider the following 250-residue polypeptide: tRNA (guanine-N(1)-)-methyltransferase (250 aa).

Residues Gly116 and 136–141 (IGDYVL) contribute to the S-adenosyl-L-methionine site.

Belongs to the RNA methyltransferase TrmD family. Homodimer.

The protein resides in the cytoplasm. The enzyme catalyses guanosine(37) in tRNA + S-adenosyl-L-methionine = N(1)-methylguanosine(37) in tRNA + S-adenosyl-L-homocysteine + H(+). Its function is as follows. Specifically methylates guanosine-37 in various tRNAs. This is tRNA (guanine-N(1)-)-methyltransferase from Pseudomonas savastanoi pv. phaseolicola (strain 1448A / Race 6) (Pseudomonas syringae pv. phaseolicola (strain 1448A / Race 6)).